The primary structure comprises 343 residues: Ribosomal RNA small subunit methyltransferase C (343 aa).

Belongs to the methyltransferase superfamily. RsmC family. In terms of assembly, monomer.

The protein localises to the cytoplasm. The catalysed reaction is guanosine(1207) in 16S rRNA + S-adenosyl-L-methionine = N(2)-methylguanosine(1207) in 16S rRNA + S-adenosyl-L-homocysteine + H(+). Specifically methylates the guanine in position 1207 of 16S rRNA in the 30S particle. This Escherichia coli O7:K1 (strain IAI39 / ExPEC) protein is Ribosomal RNA small subunit methyltransferase C.